A 188-amino-acid polypeptide reads, in one-letter code: Mediator of RNA polymerase II transcription subunit 11 (188 aa).

Positions 46–72 form a coiled coil; that stretch reads KNKMEDNANNFKKLITQVENELSAQMQ. Residues 116–188 form a disordered region; it reads DPTSDEPQTT…MTDDDDDMEQ (73 aa). Residues 123–141 are compositionally biased toward acidic residues; the sequence is QTTEEDEEDGSDDLNEDGA. Residues 146-155 show a composition bias toward low complexity; that stretch reads SSTVTSSTTD. The segment covering 171–180 has biased composition (basic and acidic residues); that stretch reads SQEESGRQMT.

Belongs to the Mediator complex subunit 11 family. As to quaternary structure, component of the Mediator complex.

Its subcellular location is the nucleus. Its function is as follows. Component of the Mediator complex, a coactivator involved in the regulated transcription of nearly all RNA polymerase II-dependent genes. Mediator functions as a bridge to convey information from gene-specific regulatory proteins to the basal RNA polymerase II transcription machinery. Mediator is recruited to promoters by direct interactions with regulatory proteins and serves as a scaffold for the assembly of a functional pre-initiation complex with RNA polymerase II and the general transcription factors. The chain is Mediator of RNA polymerase II transcription subunit 11 (mdt-11) from Caenorhabditis elegans.